A 745-amino-acid chain; its full sequence is Copper-transporting ATPase (745 aa).

The HMA domain occupies 1–67 (MKESFYIEGM…LIEKLGYSPK (67 aa)). Over 1 to 83 (MKESFYIEGM…KKEFFSPNVK (83 aa)) the chain is Cytoplasmic. Residues Cys12 and Cys15 each contribute to the Cu cation site. The helical transmembrane segment at 84–104 (LALAVIFTLFVVYLSMGAMLS) threads the bilayer. Residues 105–124 (PSLLPESLLAINNHSNFLNA) are Extracellular-facing. The chain crosses the membrane as a helical span at residues 125–144 (CLQLIGALIVMHLGRDFYIQ). Topologically, residues 145 to 151 (GFKALWH) are cytoplasmic. The helical transmembrane segment at 152 to 172 (RQPNMSSLIAIGTSAALISSL) threads the bilayer. Over 173-194 (WQLYLVYTNHYTDQWSYGHYYF) the chain is Extracellular. A helical transmembrane segment spans residues 195–215 (ESVCVILMFVMVGKRIENVSK). At 216 to 343 (DKALDAMQAL…KAEISRLADK (128 aa)) the chain is on the cytoplasmic side. The helical transmembrane segment at 344–366 (VSSVFVPSVIAIAILAFVVWLII) threads the bilayer. The Extracellular segment spans residues 367 to 379 (APKPDFWWNFGIA). The helical transmembrane segment at 380–397 (LEVFVSVLVISCPCALGL) threads the bilayer. Residues 398–685 (ATPMSILVAN…KLSQATIKNI (288 aa)) lie on the Cytoplasmic side of the membrane. Asp435 functions as the 4-aspartylphosphate intermediate in the catalytic mechanism. Mg(2+) contacts are provided by Asp631 and Asp635. The helical transmembrane segment at 686-705 (KENLFWAFCYNSVFIPLACG) threads the bilayer. Over 706–716 (VLYKANIMLSP) the chain is Extracellular. A helical membrane pass occupies residues 717–735 (AIAGLAMSLSSVSVVLNSQ). The Cytoplasmic segment spans residues 736-745 (RLRNFKIKDH).

Belongs to the cation transport ATPase (P-type) (TC 3.A.3) family. Type IB subfamily.

The protein localises to the cell membrane. The catalysed reaction is Cu(2+)(in) + ATP + H2O = Cu(2+)(out) + ADP + phosphate + H(+). In terms of biological role, probably involved in copper export. In Helicobacter pylori (Campylobacter pylori), this protein is Copper-transporting ATPase (copA).